The sequence spans 51 residues: Large ribosomal subunit protein bL33 (51 aa).

The protein belongs to the bacterial ribosomal protein bL33 family.

The polypeptide is Large ribosomal subunit protein bL33 (Acinetobacter baylyi (strain ATCC 33305 / BD413 / ADP1)).